Reading from the N-terminus, the 360-residue chain is Dual-specificity RNA methyltransferase RlmN (360 aa).

Glu91 serves as the catalytic Proton acceptor. In terms of domain architecture, Radical SAM core spans 110–343 (RSEKYTVCIS…CTIRESKGLD (234 aa)). A disulfide bridge connects residues Cys117 and Cys348. 3 residues coordinate [4Fe-4S] cluster: Cys124, Cys128, and Cys131. Residues 174–175 (GE), Ser206, 229–231 (SLH), and Asn305 contribute to the S-adenosyl-L-methionine site. Cys348 serves as the catalytic S-methylcysteine intermediate.

It belongs to the radical SAM superfamily. RlmN family. Requires [4Fe-4S] cluster as cofactor.

Its subcellular location is the cytoplasm. The catalysed reaction is adenosine(2503) in 23S rRNA + 2 reduced [2Fe-2S]-[ferredoxin] + 2 S-adenosyl-L-methionine = 2-methyladenosine(2503) in 23S rRNA + 5'-deoxyadenosine + L-methionine + 2 oxidized [2Fe-2S]-[ferredoxin] + S-adenosyl-L-homocysteine. The enzyme catalyses adenosine(37) in tRNA + 2 reduced [2Fe-2S]-[ferredoxin] + 2 S-adenosyl-L-methionine = 2-methyladenosine(37) in tRNA + 5'-deoxyadenosine + L-methionine + 2 oxidized [2Fe-2S]-[ferredoxin] + S-adenosyl-L-homocysteine. In terms of biological role, specifically methylates position 2 of adenine 2503 in 23S rRNA and position 2 of adenine 37 in tRNAs. m2A2503 modification seems to play a crucial role in the proofreading step occurring at the peptidyl transferase center and thus would serve to optimize ribosomal fidelity. This is Dual-specificity RNA methyltransferase RlmN from Aliarcobacter butzleri (strain RM4018) (Arcobacter butzleri).